Here is a 422-residue protein sequence, read N- to C-terminus: C-type lectin domain family 4 member M (422 aa).

The Cytoplasmic portion of the chain corresponds to 1-49 (MSDSKEPRVQPLGLLEEDPTTSGIRLFPRDFQFQQTHGHKSSTGCLGHG). The Endocytosis signal signature appears at 14–15 (LL). The helical; Signal-anchor for type II membrane protein transmembrane segment at 50–70 (PLVLQLLSFALLAGVLVAILV) threads the bilayer. The Extracellular portion of the chain corresponds to 71-422 (QVYKVPSSLS…KKPIACFRDE (352 aa)). An N-linked (GlcNAc...) asparagine glycan is attached at Asn92. Repeat copies occupy residues 108 to 130 (KLQEIYQELTQLKAAVGELPEKS), 131 to 151 (KQQEIYQELTQLKASVGELPE), 154 to 176 (QLQEIYQELTRLKAAVGELPEES), 177 to 199 (RLQEIYQELTRLKAAVGELPEKS), 200 to 222 (RLQEIYQELTRLKAAVGELPEKS), 223 to 245 (RLQEIYQELTRLKAAVGELPEKS), 246 to 268 (KLQEIYQELTRLKAAVGELPDQS), and 269 to 291 (KQQQIYQELTDLKTAFERLCCRC). Residues 108–292 (KLQEIYQELT…AFERLCCRCP (185 aa)) are 8 X approximate tandem repeats. Intrachain disulfides connect Cys288-Cys418, Cys291-Cys302, Cys319-Cys412, and Cys391-Cys404. The C-type lectin domain maps to 297–413 (FFQGNCYFMS…CNVDNYWICK (117 aa)). 6 residues coordinate Ca(2+): Glu382, Asn384, Ser386, Glu389, Asn400, and Asp401. N-linked (GlcNAc...) asparagine glycosylation is present at Asn384.

In terms of assembly, homotetramer.

It localises to the membrane. Probable pathogen-recognition receptor involved in peripheral immune surveillance in liver. May mediate the endocytosis of pathogens which are subsequently degraded in lysosomal compartments. Probably recognizes in a calcium-dependent manner high mannose N-linked oligosaccharides in a variety of pathogen antigens. Is a receptor for ICAM3, probably by binding to mannose-like carbohydrates. The sequence is that of C-type lectin domain family 4 member M (CLEC4M) from Symphalangus syndactylus (Siamang).